A 445-amino-acid chain; its full sequence is Glycine--tRNA ligase (445 aa).

Positions 97 and 145 each coordinate substrate. Residues 177–179 (RNE), 187–192 (FRTCEF), 262–263 (EV), and 308–311 (GLTR) each bind ATP. 192–196 (FEQME) is a binding site for substrate. 304-308 (ETSAG) contacts substrate.

Belongs to the class-II aminoacyl-tRNA synthetase family. In terms of assembly, homodimer.

It localises to the cytoplasm. The catalysed reaction is tRNA(Gly) + glycine + ATP = glycyl-tRNA(Gly) + AMP + diphosphate. Catalyzes the attachment of glycine to tRNA(Gly). The polypeptide is Glycine--tRNA ligase (Borrelia garinii subsp. bavariensis (strain ATCC BAA-2496 / DSM 23469 / PBi) (Borreliella bavariensis)).